The sequence spans 97 residues: Small integral membrane protein 8 (97 aa).

A disordered region spans residues 1–24; that stretch reads MSSAPEPPTFKKEPPKEKEFQSPG. The segment covering 9–20 has biased composition (basic and acidic residues); the sequence is TFKKEPPKEKEF. The chain crosses the membrane as a helical span at residues 48 to 70; it reads PVMAFGLVTLSLCVAYIGYLHAI.

This sequence belongs to the SMIM8 family.

The protein localises to the membrane. The chain is Small integral membrane protein 8 (SMIM8) from Homo sapiens (Human).